A 521-amino-acid chain; its full sequence is Melanopsin (521 aa).

The Extracellular segment spans residues 1–71 (MDSPSGPRVL…VDVPDHAHYT (71 aa)). Asn-30 and Asn-34 each carry an N-linked (GlcNAc...) asparagine glycan. A helical transmembrane segment spans residues 72–92 (LGTVILLVGLTGMLGNLTVIY). Residues 93–106 (TFCRNRGLRTPANM) are Cytoplasmic-facing. The chain crosses the membrane as a helical span at residues 107–127 (FIINLAVSDFLMSVTQAPVFF). The Extracellular segment spans residues 128–143 (ASSLYKKWLFGETGCE). A disulfide bond links Cys-142 and Cys-220. Residues 144–164 (FYAFCGAVFGITSMITLTAIA) traverse the membrane as a helical segment. Residues 165–187 (MDRYLVITRPLATIGRGSKRRTA) lie on the Cytoplasmic side of the membrane. Residues 188–208 (LVLLGVWLYALAWSLPPFFGW) traverse the membrane as a helical segment. Over 209–237 (SAYVPEGLLTSCSWDYMTFTPQVRAYTML) the chain is Extracellular. The chain crosses the membrane as a helical span at residues 238–258 (LFCFVFFLPLLIIIFCYIFIF). The Cytoplasmic portion of the chain corresponds to 259–293 (RAIRETGRACEGCGESPLRQRRQWQRLQSEWKMAK). Residues 294–314 (VALIVILLFVLSWAPYSTVAL) form a helical membrane-spanning segment. At 315-329 (VAFAGYSHILTPYMS) the chain is on the extracellular side. Residues 330 to 350 (SVPAVIAKASAIHNPIIYAIT) form a helical membrane-spanning segment. Lys-337 carries the N6-(retinylidene)lysine modification. Residues 351–521 (HPKYRVAIAQ…LEDDVTLRHL (171 aa)) are Cytoplasmic-facing. The disordered stretch occupies residues 445-486 (GELKASSSPQVQRSKTPKVPGPSTCRPMKGQGARPSSLRGDQ). The segment covering 449-458 (ASSSPQVQRS) has biased composition (polar residues).

It belongs to the G-protein coupled receptor 1 family. Opsin subfamily. Expressed in the retinal pigment epithelium and ganglion cell layer (at protein level). Also expressed in amacrine cell layers of the retina. Weakly expressed in vibrissae, and tail. As to expression, observed with processes in the outer strata of inner plexiform layer (IPL) close to the inner nuclear layer (INL) or is found to be bistratified with processes located both in the inner (ON) or outer (OFF) layers of the IPL (at protein level). A second population of isoform 1 is identified in processes which are confined to the inner layer of the IPL near to the ganglion cell layer (GCL) (at protein level). In terms of tissue distribution, about 40 times more abundant than isoform 1 in the retina (at protein level). Isoform 2 is involved in processes localized to the outer IPL or is bistratified with processes in both the inner and outer layers of the IPL (at protein level). Isoform 2 is absent in the processes confined only to the inner layer of the IPL (at protein level).

It localises to the cell membrane. Its subcellular location is the cell projection. It is found in the axon. The protein localises to the dendrite. The protein resides in the perikaryon. Functionally, photoreceptor that binds cis-retinaldehydes. Contributes to pupillar reflex, photoentrainment and other non-image forming responses to light. May be involved in the optokinetic visual tracking response. May be involved in the regulation of retinal hyaloid vessel growth and regression. In Mus musculus (Mouse), this protein is Melanopsin (Opn4).